The following is a 141-amino-acid chain: uncharacterized protein (141 aa).

The disordered stretch occupies residues I1–A61. Positions T8–P58 are enriched in pro residues. Residues K98–F116 constitute a DNA-binding region (H-T-H motif).

This is an uncharacterized protein from Owenia fusiformis (Polychaete worm).